Here is a 323-residue protein sequence, read N- to C-terminus: HTH-type transcriptional activator CmpR (323 aa).

Residues 4-61 enclose the HTH lysR-type domain; that stretch reads LTLHQLKVFEAAARHSSFTRAAEELYLTQPTVSIQVKQLTKAVGLPLFEQIGKRLYLT. Residues 21–40 constitute a DNA-binding region (H-T-H motif); sequence FTRAAEELYLTQPTVSIQVK. A disordered region spans residues 304-323; the sequence is IPESTTTDPELDAPQPVVGV.

The protein belongs to the LysR transcriptional regulatory family.

The protein resides in the cytoplasm. In terms of biological role, activates transcription of the cmpABCD operon under carbon dioxide-limited conditions. The protein is HTH-type transcriptional activator CmpR (cmpR) of Synechococcus elongatus (strain ATCC 33912 / PCC 7942 / FACHB-805) (Anacystis nidulans R2).